Reading from the N-terminus, the 223-residue chain is Ribose-5-phosphate isomerase A (223 aa).

Substrate contacts are provided by residues 29 to 32 (TGST), 82 to 85 (DGAD), and 95 to 98 (KGGG). Catalysis depends on Glu104, which acts as the Proton acceptor. Substrate is bound at residue Lys122.

It belongs to the ribose 5-phosphate isomerase family. In terms of assembly, homodimer.

The catalysed reaction is aldehydo-D-ribose 5-phosphate = D-ribulose 5-phosphate. It participates in carbohydrate degradation; pentose phosphate pathway; D-ribose 5-phosphate from D-ribulose 5-phosphate (non-oxidative stage): step 1/1. Its function is as follows. Catalyzes the reversible conversion of ribose-5-phosphate to ribulose 5-phosphate. The sequence is that of Ribose-5-phosphate isomerase A from Neisseria meningitidis serogroup B (strain ATCC BAA-335 / MC58).